The sequence spans 508 residues: Catalase (508 aa).

The N-terminal stretch at 1-21 is a signal peptide; sequence MHMSKSFLLISMGLASISVHA. Active-site residues include H72 and N145. Y353 is a heme binding site. Polar residues predominate over residues 373-392; it reads PKSPVANHNQDGPSNNSTGL. A disordered region spans residues 373-396; sequence PKSPVANHNQDGPSNNSTGLGNVD.

The protein belongs to the catalase family. It depends on heme as a cofactor.

It localises to the periplasm. It catalyses the reaction 2 H2O2 = O2 + 2 H2O. Its function is as follows. Decomposes hydrogen peroxide into water and oxygen; serves to protect cells from the toxic effects of hydrogen peroxide. This Vibrio vulnificus (strain YJ016) protein is Catalase.